A 309-amino-acid chain; its full sequence is UDP-N-acetylenolpyruvoylglucosamine reductase (309 aa).

Positions 33-198 constitute an FAD-binding PCMH-type domain; the sequence is RVGGPAQVLF…TSARFRGTPA (166 aa). Arginine 178 is a catalytic residue. The active-site Proton donor is serine 227. The active site involves glutamate 297.

It belongs to the MurB family. It depends on FAD as a cofactor.

The protein resides in the cytoplasm. The catalysed reaction is UDP-N-acetyl-alpha-D-muramate + NADP(+) = UDP-N-acetyl-3-O-(1-carboxyvinyl)-alpha-D-glucosamine + NADPH + H(+). The protein operates within cell wall biogenesis; peptidoglycan biosynthesis. Cell wall formation. This chain is UDP-N-acetylenolpyruvoylglucosamine reductase, found in Rhodopseudomonas palustris (strain HaA2).